Consider the following 559-residue polypeptide: Frizzled-5 (559 aa).

The signal sequence occupies residues 1-26; the sequence is MGSFRSGVFALSFVVLLLDYFAPAQA. Topologically, residues 27-220 are extracellular; it reads ASKAIVCQEI…QPYFTQDEKM (194 aa). Residues 28–149 enclose the FZ domain; that stretch reads SKAIVCQEIT…GDPDTLCMYY (122 aa). 5 cysteine pairs are disulfide-bonded: Cys-33/Cys-94, Cys-41/Cys-87, Cys-78/Cys-116, Cys-105/Cys-146, and Cys-109/Cys-133. Asn-47 is a glycosylation site (N-linked (GlcNAc...) asparagine). Asn-150 is a glycosylation site (N-linked (GlcNAc...) asparagine). A helical membrane pass occupies residues 221 to 241; the sequence is FVTFWIGLWSILCFISTFTTV. Over 242 to 257 the chain is Cytoplasmic; that stretch reads ATFLIDMERFRYPERP. Residues 258–278 form a helical membrane-spanning segment; sequence IIFLSACYLFVSIGYVVRLIV. Over 279 to 301 the chain is Extracellular; sequence GHENVACNKDHIHYETTGPALCT. Residues 302 to 322 traverse the membrane as a helical segment; the sequence is IVFLLIYFFGMASSIWWVILT. Residues 323 to 343 lie on the Cytoplasmic side of the membrane; that stretch reads FTWFLAAGMKWGNEAIASYSQ. Residues 344–364 form a helical membrane-spanning segment; sequence YFHMAAWLIPSVKSIAVLALS. Over 365–387 the chain is Extracellular; sequence SVDGDPVAGICYVGNQNLDNLRG. The helical transmembrane segment at 388 to 408 threads the bilayer; that stretch reads FVLAPLVVYLFSGTMFLLAGF. At 409–434 the chain is on the cytoplasmic side; that stretch reads VSLFRIRSVIKQGGTKTDKLEKLMIR. The helical transmembrane segment at 435 to 455 threads the bilayer; sequence IGIFSVLYTVPATIVVACYIY. At 456–483 the chain is on the extracellular side; it reads EQHYREHWEKTHNCSCPGDKQRYRPDYA. Asn-468 carries an N-linked (GlcNAc...) asparagine glycan. A helical membrane pass occupies residues 484-504; that stretch reads VFMLKYLMCLVVGITSGVWIW. Topologically, residues 505-559 are cytoplasmic; it reads SGKTLESWKRFTGRCCRNSKPINASAYSEASRALTPRTGLSNLTLPHKQVPLSHV. The short motif at 507–512 is the Lys-Thr-X-X-X-Trp motif, mediates interaction with the PDZ domain of Dvl family members element; that stretch reads KTLESW. A PDZ-binding motif is present at residues 557-559; sequence SHV.

It belongs to the G-protein coupled receptor Fz/Smo family. As to expression, expressed in retina.

The protein localises to the cell membrane. It localises to the golgi apparatus membrane. Functionally, receptor for Wnt proteins that functions in the canonical Wnt/beta-catenin signaling pathway. The canonical Wnt/beta-catenin signaling pathway leads to the activation of disheveled proteins, inhibition of GSK-3 kinase, nuclear accumulation of beta-catenin and activation of Wnt target genes. A second signaling pathway involving PKC and calcium fluxes has been seen for some family members, but it is not yet clear if it represents a distinct pathway or if it can be integrated in the canonical pathway, as PKC seems to be required for Wnt-mediated inactivation of GSK-3 kinase. Both pathways seem to involve interactions with G-proteins. May be involved in transduction and intercellular transmission of polarity information during tissue morphogenesis and/or in differentiated tissues. This chain is Frizzled-5 (fzd5), found in Xenopus laevis (African clawed frog).